The chain runs to 302 residues: N-acetyl-D-glucosamine kinase (302 aa).

Residues G4 to K11 and G133 to Y140 contribute to the ATP site. Zn(2+) is bound by residues H157, C177, C179, and C184.

Belongs to the ROK (NagC/XylR) family. NagK subfamily.

It carries out the reaction N-acetyl-D-glucosamine + ATP = N-acetyl-D-glucosamine 6-phosphate + ADP + H(+). Its pathway is cell wall biogenesis; peptidoglycan recycling. Functionally, catalyzes the phosphorylation of N-acetyl-D-glucosamine (GlcNAc) derived from cell-wall degradation, yielding GlcNAc-6-P. The polypeptide is N-acetyl-D-glucosamine kinase (Vibrio parahaemolyticus serotype O3:K6 (strain RIMD 2210633)).